We begin with the raw amino-acid sequence, 175 residues long: Alpha-crystallin B chain (175 aa).

Residue M1 is modified to N-acetylmethionine. The residue at position 19 (S19) is a Phosphoserine. An O-linked (GlcNAc) serine glycan is attached at S41. Phosphoserine occurs at positions 45 and 59. One can recognise a sHSP domain in the interval 56–164 (RAPSWIDTGL…PERTIPITRE (109 aa)). Position 83 (H83) interacts with Zn(2+). Position 92 is an N6-acetyllysine (K92). The Zn(2+) site is built by H104, E106, H111, and H119. The interval 142–175 (VLTVNGPRKQAPGPERTIPITREEKPAVTAAPKK) is disordered. The residue at position 166 (K166) is an N6-acetyllysine. A glycan (O-linked (GlcNAc) threonine) is linked at T170.

This sequence belongs to the small heat shock protein (HSP20) family. As to quaternary structure, heteromer composed of three CRYAA and one CRYAB subunits. Aggregates with homologous proteins, including the small heat shock protein HSPB1, to form large heteromeric complexes. Inter-subunit bridging via zinc ions enhances stability, which is crucial as there is no protein turn over in the lens. Interacts with HSPBAP1 and TTN/titin. Interacts with TMEM109; in the cellular response to DNA damage. Interacts with DES; binds rapidly during early stages of DES filament assembly and a reduced binding seen in the later stages. Interacts with TMED10; the interaction mediates the translocation from the cytoplasm into the ERGIC (endoplasmic reticulum-Golgi intermediate compartment) and thereby secretion. Interacts with ATP6V1A and with MTOR, forming a ternary complex. Lens as well as other tissues.

The protein resides in the cytoplasm. Its subcellular location is the nucleus. The protein localises to the secreted. It is found in the lysosome. Its function is as follows. May contribute to the transparency and refractive index of the lens. Has chaperone-like activity, preventing aggregation of various proteins under a wide range of stress conditions. In lens epithelial cells, stabilizes the ATP6V1A protein, preventing its degradation by the proteasome. The chain is Alpha-crystallin B chain (CRYAB) from Oryctolagus cuniculus (Rabbit).